A 342-amino-acid polypeptide reads, in one-letter code: S-adenosylmethionine:tRNA ribosyltransferase-isomerase (342 aa).

It belongs to the QueA family. In terms of assembly, monomer.

The protein resides in the cytoplasm. It catalyses the reaction 7-aminomethyl-7-carbaguanosine(34) in tRNA + S-adenosyl-L-methionine = epoxyqueuosine(34) in tRNA + adenine + L-methionine + 2 H(+). It functions in the pathway tRNA modification; tRNA-queuosine biosynthesis. In terms of biological role, transfers and isomerizes the ribose moiety from AdoMet to the 7-aminomethyl group of 7-deazaguanine (preQ1-tRNA) to give epoxyqueuosine (oQ-tRNA). The polypeptide is S-adenosylmethionine:tRNA ribosyltransferase-isomerase (Streptococcus pyogenes serotype M2 (strain MGAS10270)).